The chain runs to 76 residues: Attractin (76 aa).

The first 18 residues, Met1 to Ala18, serve as a signal peptide directing secretion. 3 cysteine pairs are disulfide-bonded: Cys22–Cys59, Cys31–Cys51, and Cys38–Cys44. Residue Asn26 is glycosylated (N-linked (GlcNAc...) asparagine).

As to quaternary structure, binds to temptin and enticin. Produced by the albumen gland of the egg cordons.

It localises to the secreted. Functionally, water-borne pheromone that attract the marine mollusk Aplysia into breeding aggregations and coordinate male and female reproductive behavior within the aggregation. In Aplysia californica (California sea hare), this protein is Attractin (ATT).